Reading from the N-terminus, the 462-residue chain is Putative amidase AmiB2 (462 aa).

Active-site charge relay system residues include Lys-81 and Ser-155. Catalysis depends on Ser-179, which acts as the Acyl-ester intermediate.

The protein belongs to the amidase family.

The catalysed reaction is a monocarboxylic acid amide + H2O = a monocarboxylate + NH4(+). This Mycobacterium bovis (strain ATCC BAA-935 / AF2122/97) protein is Putative amidase AmiB2 (amiB2).